The chain runs to 81 residues: Photosystem I iron-sulfur center (81 aa).

2 4Fe-4S ferredoxin-type domains span residues 2–31 (SHSV…MVPW) and 37–68 (GQIA…IRVY). Residues Cys11, Cys14, Cys17, Cys21, Cys48, Cys51, Cys54, and Cys58 each coordinate [4Fe-4S] cluster.

In terms of assembly, the cyanobacterial PSI reaction center is composed of one copy each of PsaA,B,C,D,E,F,I,J,K,L,M and X, and forms trimeric complexes. The cofactor is [4Fe-4S] cluster.

The protein localises to the cellular thylakoid membrane. It catalyses the reaction reduced [plastocyanin] + hnu + oxidized [2Fe-2S]-[ferredoxin] = oxidized [plastocyanin] + reduced [2Fe-2S]-[ferredoxin]. In terms of biological role, apoprotein for the two 4Fe-4S centers FA and FB of photosystem I (PSI); essential for photochemical activity. FB is the terminal electron acceptor of PSI, donating electrons to ferredoxin. The C-terminus interacts with PsaA/B/D and helps assemble the protein into the PSI complex. Required for binding of PsaD and PsaE to PSI. PSI is a plastocyanin/cytochrome c6-ferredoxin oxidoreductase, converting photonic excitation into a charge separation, which transfers an electron from the donor P700 chlorophyll pair to the spectroscopically characterized acceptors A0, A1, FX, FA and FB in turn. This is Photosystem I iron-sulfur center from Synechococcus sp. (strain RCC307).